The sequence spans 477 residues: Actin-related protein 7 (477 aa).

It belongs to the actin family. Forms a heterodimer with ARP9. Interacts with NPL6. Component of the two forms of the RSC complex composed of at least either RSC1 or RSC2, and ARP7, ARP9, LDB7, NPL6, RSC3, RSC30, RSC4, RSC58, RSC6, RSC8, RSC9, SFH1, STH1, HTL1 and probably RTT102. The complexes interact with histone and histone variant components of centromeric chromatin. Component of the SWI/SNF global transcription activator complex. The 1.14 MDa SWI/SNF complex is composed of 11 different subunits: one copy each of SWI1, SNF2/SWI2, SNF5, SNF12/SWP73, ARP7/SWP61, ARP9/SWP59; two copies each of SWI3, SNF6, SNF11, SWP82; and three copies of TAF14/SWP29.

Its subcellular location is the nucleus. Its function is as follows. Component of the chromatin structure remodeling complex (RSC), which is involved in transcription regulation and nucleosome positioning. RSC is responsible for the transfer of a histone octamer from a nucleosome core particle to naked DNA. The reaction requires ATP and involves an activated RSC-nucleosome intermediate. Remodeling reaction also involves DNA translocation, DNA twist and conformational change. As a reconfigurer of centromeric and flanking nucleosomes, RSC complex is required both for proper kinetochore function in chromosome segregation and, via a PKC1-dependent signaling pathway, for organization of the cellular cytoskeleton. This subunit is involved in transcriptional regulation. Heterodimer of ARP7 and ARP9 functions with HMG box proteins to facilitate proper chromatin architecture. Heterodimer formation is necessary for assembly into RSC complex. Part of the SWI/SNF complex, an ATP-dependent chromatin remodeling complex, is required for the positive and negative regulation of gene expression of a large number of genes. It changes chromatin structure by altering DNA-histone contacts within a nucleosome, leading eventually to a change in nucleosome position, thus facilitating or repressing binding of gene-specific transcription factors. The polypeptide is Actin-related protein 7 (ARP7) (Saccharomyces cerevisiae (strain ATCC 204508 / S288c) (Baker's yeast)).